The following is a 914-amino-acid chain: Exoglucanase-2 (914 aa).

An N-terminal signal peptide occupies residues 1–33 (MKRRLMKGISLLTLVFLIGIMLQLSLKSELTAY). The 152-residue stretch at 763–914 (VEGVLIIQSF…SGNLVYGIEP (152 aa)) folds into the CBM3 domain.

This sequence belongs to the glycosyl hydrolase 48 (cellulase L) family.

The enzyme catalyses Hydrolysis of (1-&gt;4)-beta-D-glucosidic linkages in cellulose and cellotetraose, releasing cellobiose from the non-reducing ends of the chains.. This Thermoclostridium stercorarium (strain ATCC 35414 / DSM 8532 / NCIMB 11754) (Clostridium stercorarium) protein is Exoglucanase-2 (celY).